The following is a 619-amino-acid chain: Replication restart protein PriA (619 aa).

In terms of domain architecture, Helicase ATP-binding spans 119–285 (LKELQKHSAS…KDKALVRLKG (167 aa)). 132–139 (GDTGSGKT) serves as a coordination point for ATP. The DEAH box motif lies at 228 to 231 (DEEH). Positions 336, 339, 345, 348, 363, 366, 376, and 379 each coordinate Zn(2+). A Helicase C-terminal domain is found at 371-532 (PIPKICSACQ…ELYPPFSRLC (162 aa)).

The protein belongs to the helicase family. PriA subfamily. In terms of assembly, component of the replication restart primosome. The cofactor is Zn(2+).

It carries out the reaction Couples ATP hydrolysis with the unwinding of duplex DNA by translocating in the 3'-5' direction.. It catalyses the reaction ATP + H2O = ADP + phosphate + H(+). In terms of biological role, initiates the restart of stalled replication forks, which reloads the replicative helicase on sites other than the origin of replication. Recognizes and binds to abandoned replication forks and remodels them to uncover a helicase loading site. Promotes assembly of the primosome at these replication forks. Important for survival of the bacteria in host cells. The protein is Replication restart protein PriA of Helicobacter pylori (strain ATCC 700392 / 26695) (Campylobacter pylori).